Here is a 439-residue protein sequence, read N- to C-terminus: MLDILLLRKDLDSAIARLETRKKPQAFLQVEAFQSLESERKTLQTRTEELQSRRNQLSKQVGQLKARGENADAVMAEVGGLKAELENSAARLEQIQAELHTLLVAVPNLPHESVPVGSDESGNVEVRRWSPDGQDPKPLGFPAKDHVDLGEPLGLDFDMGVKLSGSRFTVMKGPIARLHRALAQFMLDVQTREHGYTECYVPYVVNADSLRGTGQLPKFEGDLFAAKKGGQDGEPVPDNAALYLIPTSEVPLTNFVRDQVVPESELPIRLTAHTPCFRSEAGSYGRDTRGMIRQHQFDKVEMVQITHPDRSYEALEEMTGHAEAVLQKLGLPYRVMSLCTGDMGFGAAKTYDLEVWLPAQNTYREISSVSNCEAFQARRLQARFKNAQGKNELVHTLNGSGLAVGRTLVAVLENYQQADGSVAVPEALRPYLGGDSVLR.

Residue Thr247–Glu249 coordinates L-serine. An ATP-binding site is contributed by Arg278 to Glu280. Glu301 contacts L-serine. ATP is bound at residue Glu365 to Ser368. Ser400 provides a ligand contact to L-serine.

The protein belongs to the class-II aminoacyl-tRNA synthetase family. Type-1 seryl-tRNA synthetase subfamily. Homodimer. The tRNA molecule binds across the dimer.

It localises to the cytoplasm. The enzyme catalyses tRNA(Ser) + L-serine + ATP = L-seryl-tRNA(Ser) + AMP + diphosphate + H(+). It catalyses the reaction tRNA(Sec) + L-serine + ATP = L-seryl-tRNA(Sec) + AMP + diphosphate + H(+). Its pathway is aminoacyl-tRNA biosynthesis; selenocysteinyl-tRNA(Sec) biosynthesis; L-seryl-tRNA(Sec) from L-serine and tRNA(Sec): step 1/1. In terms of biological role, catalyzes the attachment of serine to tRNA(Ser). Is also able to aminoacylate tRNA(Sec) with serine, to form the misacylated tRNA L-seryl-tRNA(Sec), which will be further converted into selenocysteinyl-tRNA(Sec). This Paracidovorax citrulli (strain AAC00-1) (Acidovorax citrulli) protein is Serine--tRNA ligase.